The primary structure comprises 277 residues: Phosphoribosylaminoimidazole-succinocarboxamide synthase (277 aa).

The protein belongs to the SAICAR synthetase family.

The catalysed reaction is 5-amino-1-(5-phospho-D-ribosyl)imidazole-4-carboxylate + L-aspartate + ATP = (2S)-2-[5-amino-1-(5-phospho-beta-D-ribosyl)imidazole-4-carboxamido]succinate + ADP + phosphate + 2 H(+). It functions in the pathway purine metabolism; IMP biosynthesis via de novo pathway; 5-amino-1-(5-phospho-D-ribosyl)imidazole-4-carboxamide from 5-amino-1-(5-phospho-D-ribosyl)imidazole-4-carboxylate: step 1/2. The chain is Phosphoribosylaminoimidazole-succinocarboxamide synthase from Salinispora arenicola (strain CNS-205).